The sequence spans 356 residues: Nicotinate-nucleotide--dimethylbenzimidazole phosphoribosyltransferase (356 aa).

The Proton acceptor role is filled by Glu317.

It belongs to the CobT family. Homodimer.

It catalyses the reaction 5,6-dimethylbenzimidazole + nicotinate beta-D-ribonucleotide = alpha-ribazole 5'-phosphate + nicotinate + H(+). It participates in nucleoside biosynthesis; alpha-ribazole biosynthesis; alpha-ribazole from 5,6-dimethylbenzimidazole: step 1/2. Its function is as follows. Catalyzes the synthesis of alpha-ribazole-5'-phosphate from nicotinate mononucleotide (NAMN) and 5,6-dimethylbenzimidazole (DMB). This is Nicotinate-nucleotide--dimethylbenzimidazole phosphoribosyltransferase from Salmonella paratyphi C (strain RKS4594).